The following is a 210-amino-acid chain: Thymidylate kinase (210 aa).

Residue 10-17 (GPEGAGKS) participates in ATP binding.

This sequence belongs to the thymidylate kinase family.

The enzyme catalyses dTMP + ATP = dTDP + ADP. Functionally, phosphorylation of dTMP to form dTDP in both de novo and salvage pathways of dTTP synthesis. In Pseudomonas putida (strain ATCC 700007 / DSM 6899 / JCM 31910 / BCRC 17059 / LMG 24140 / F1), this protein is Thymidylate kinase.